Here is a 418-residue protein sequence, read N- to C-terminus: MRLAPTTVLLWAWGSLQAFEIVEKENIFQRTPCPAFLVFDNTAYLADMSFELPCHCKPEDVSAVVWYYQKYLGSSHTTVLTDFDGRLLTEAAHVRVGSSMLARFSIRMFSLLVFRAQPEDSGLYFCGTRNGDYFYAYDVDIQSHKGMVASFRDKGQEPLPDEYYGSLHVFTTFWEWTPCDRCGVRGEQWRFGLCYLQNPNLSPRYIKTLPDVVSCGSRAVPWKLHLKTKYHTPELLIQSCLVSCKKNKMGEGILAIYNYVSKLGGRPWVPQVPIQFHQQRLGHGLIISCPGARPEHAVAWDKDSQPLYRTQYLKGVNRSMRVFIDHGNHLHIRFTQLSDRGIYYCWRQGLKIAGFRLGVTSRGRYPASLSDPETRTAVELTLIGYLLIAVVFVTIHLCRCCCQSRCCPNFSAQTLLQL.

The signal sequence occupies residues 1-18 (MRLAPTTVLLWAWGSLQA). Topologically, residues 19–376 (FEIVEKENIF…ASLSDPETRT (358 aa)) are extracellular. The region spanning 267 to 361 (PWVPQVPIQF…IAGFRLGVTS (95 aa)) is the Ig-like V-type domain. Residues C289 and C345 are joined by a disulfide bond. N317 carries N-linked (GlcNAc...) asparagine glycosylation. A helical transmembrane segment spans residues 377-397 (AVELTLIGYLLIAVVFVTIHL). The Cytoplasmic segment spans residues 398–418 (CRCCCQSRCCPNFSAQTLLQL).

This sequence belongs to the FAM187 family.

The protein resides in the membrane. The sequence is that of Ig-like V-type domain-containing protein FAM187A (Fam187a) from Rattus norvegicus (Rat).